The primary structure comprises 474 residues: Tryptophan biosynthesis protein TrpCF (474 aa).

Positions 1–262 (MTSNNLPTVL…LAARELVYGP (262 aa)) are indole-3-glycerol phosphate synthase. The interval 263-474 (NKVCGLTSPS…IFATISTFHY (212 aa)) is N-(5'-phosphoribosyl)anthranilate isomerase.

It in the N-terminal section; belongs to the TrpC family. In the C-terminal section; belongs to the TrpF family. In terms of assembly, monomer.

It catalyses the reaction N-(5-phospho-beta-D-ribosyl)anthranilate = 1-(2-carboxyphenylamino)-1-deoxy-D-ribulose 5-phosphate. It carries out the reaction 1-(2-carboxyphenylamino)-1-deoxy-D-ribulose 5-phosphate + H(+) = (1S,2R)-1-C-(indol-3-yl)glycerol 3-phosphate + CO2 + H2O. It functions in the pathway amino-acid biosynthesis; L-tryptophan biosynthesis; L-tryptophan from chorismate: step 3/5. Its pathway is amino-acid biosynthesis; L-tryptophan biosynthesis; L-tryptophan from chorismate: step 4/5. Functionally, bifunctional enzyme that catalyzes two sequential steps of tryptophan biosynthetic pathway. The first reaction is catalyzed by the isomerase, coded by the TrpF domain; the second reaction is catalyzed by the synthase, coded by the TrpC domain. The sequence is that of Tryptophan biosynthesis protein TrpCF (trpC) from Corynebacterium glutamicum (strain ATCC 13032 / DSM 20300 / JCM 1318 / BCRC 11384 / CCUG 27702 / LMG 3730 / NBRC 12168 / NCIMB 10025 / NRRL B-2784 / 534).